An 854-amino-acid polypeptide reads, in one-letter code: DNA mismatch repair protein MutS (854 aa).

Residue 614–621 (GPNMGGKS) coordinates ATP.

Belongs to the DNA mismatch repair MutS family.

This protein is involved in the repair of mismatches in DNA. It is possible that it carries out the mismatch recognition step. This protein has a weak ATPase activity. The protein is DNA mismatch repair protein MutS of Yersinia pestis bv. Antiqua (strain Antiqua).